We begin with the raw amino-acid sequence, 628 residues long: MGDLPGSTGGGSGPAAAGNASGNASSAGNTGLGVAGTTGVDRPPSPARLSHTSEKHPKVTLTELNMLRRHRELCDVVLNVGGRKIFAHRVILSACSSYFCAMFTGELEESRQTEVTIRDIDENAMELLIDFCYTAHIIVEESNVQTLLPAACLLQLVEIQDICCEFLKRQLDPTNCLGIRAFADTHSCRELLRIADKFTQHNFQEVMESEEFLLLPVGQLVDIICSDELNVRSEEQVFNAVMSWLKYNVAERRQHLAQVLQHVRLPLLSPKFLVGTVGSDLLVRSDEACRDLVDEAKNYLLLPQERPLMQGPRTRPRKPTRRGEVLFAVGGWCSGDAIASVERFDPQTNDWKMVAPMSKRRCGVGVAVLNDLLYAVGGHDGQSYLNSIERYDPQTNQWSCDVAPTTSCRTSVGVAVLDGFLYAVGGQDGVQCLNHVERYDPKENKWSKVAPMTTRRLGVAVAVLGGFLYAIGGSDGQCPLNTVERYDPRQNKWVAVSPMSTRRKHLGCAVFNNYIYAVGGRDDCMELSSAERYNPLTNTWSPIVAMTSRRSGVGLAVVNGQLYAVGGFDGSAYLKTIEVYDPETNQWRLCGCMNYRRLGGGVGVMRAPQTENYMWCENSLKQHNNPPS.

Residues 1–56 (MGDLPGSTGGGSGPAAAGNASGNASSAGNTGLGVAGTTGVDRPPSPARLSHTSEKH) are disordered. The span at 14–29 (PAAAGNASGNASSAGN) shows a compositional bias: low complexity. The BTB domain occupies 74 to 141 (CDVVLNVGGR…CYTAHIIVEE (68 aa)). The 103-residue stretch at 176–278 (CLGIRAFADT…SPKFLVGTVG (103 aa)) folds into the BACK domain. Kelch repeat units lie at residues 325–371 (VLFA…VLND), 373–419 (LYAV…VLDG), 420–466 (FLYA…VLGG), 468–513 (LYAI…VFNN), 515–560 (IYAV…VVNG), and 561–607 (QLYA…VMRA).

It functions in the pathway protein modification; protein ubiquitination. Its function is as follows. Probable substrate-specific adapter of an E3 ubiquitin-protein ligase complex which mediates the ubiquitination and subsequent proteasomal degradation of target proteins. May have a role in synapse differentiation and growth. The protein is Kelch-like protein diablo of Drosophila pseudoobscura pseudoobscura (Fruit fly).